Here is a 341-residue protein sequence, read N- to C-terminus: Protein pelota homolog (341 aa).

Belongs to the eukaryotic release factor 1 family. Pelota subfamily. As to quaternary structure, monomer. The cofactor is a divalent metal cation.

It localises to the cytoplasm. Its function is as follows. May function in recognizing stalled ribosomes, interact with stem-loop structures in stalled mRNA molecules, and effect endonucleolytic cleavage of the mRNA. May play a role in the release non-functional ribosomes and degradation of damaged mRNAs. Has endoribonuclease activity. The sequence is that of Protein pelota homolog from Methanoculleus marisnigri (strain ATCC 35101 / DSM 1498 / JR1).